Here is a 513-residue protein sequence, read N- to C-terminus: ATP synthase subunit beta (513 aa).

A disordered region spans residues 1–29; that stretch reads MATAPATEKKAPAKKAAAPKAAAPKKAAA. The span at 14–29 shows a compositional bias: low complexity; that stretch reads KKAAAPKAAAPKKAAA. 186–193 contacts ATP; that stretch reads GGAGVGKT.

The protein belongs to the ATPase alpha/beta chains family. As to quaternary structure, F-type ATPases have 2 components, CF(1) - the catalytic core - and CF(0) - the membrane proton channel. CF(1) has five subunits: alpha(3), beta(3), gamma(1), delta(1), epsilon(1). CF(0) has three main subunits: a(1), b(2) and c(9-12). The alpha and beta chains form an alternating ring which encloses part of the gamma chain. CF(1) is attached to CF(0) by a central stalk formed by the gamma and epsilon chains, while a peripheral stalk is formed by the delta and b chains.

Its subcellular location is the cell inner membrane. It carries out the reaction ATP + H2O + 4 H(+)(in) = ADP + phosphate + 5 H(+)(out). Its function is as follows. Produces ATP from ADP in the presence of a proton gradient across the membrane. The catalytic sites are hosted primarily by the beta subunits. The protein is ATP synthase subunit beta of Sphingopyxis alaskensis (strain DSM 13593 / LMG 18877 / RB2256) (Sphingomonas alaskensis).